Reading from the N-terminus, the 175-residue chain is 3-hydroxydecanoyl-[acyl-carrier-protein] dehydratase (175 aa).

The active site involves histidine 71.

It belongs to the thioester dehydratase family. FabA subfamily. In terms of assembly, homodimer.

It localises to the cytoplasm. The catalysed reaction is a (3R)-hydroxyacyl-[ACP] = a (2E)-enoyl-[ACP] + H2O. The enzyme catalyses (3R)-hydroxydecanoyl-[ACP] = (2E)-decenoyl-[ACP] + H2O. It catalyses the reaction (2E)-decenoyl-[ACP] = (3Z)-decenoyl-[ACP]. It participates in lipid metabolism; fatty acid biosynthesis. Necessary for the introduction of cis unsaturation into fatty acids. Catalyzes the dehydration of (3R)-3-hydroxydecanoyl-ACP to E-(2)-decenoyl-ACP and then its isomerization to Z-(3)-decenoyl-ACP. Can catalyze the dehydratase reaction for beta-hydroxyacyl-ACPs with saturated chain lengths up to 16:0, being most active on intermediate chain length. This Rhodopseudomonas palustris (strain BisB5) protein is 3-hydroxydecanoyl-[acyl-carrier-protein] dehydratase.